The following is a 191-amino-acid chain: Protein GrpE (191 aa).

Polar residues predominate over residues M1–T14. A disordered region spans residues M1–T35. Over residues E19 to T35 the composition is skewed to low complexity.

It belongs to the GrpE family. As to quaternary structure, homodimer.

The protein resides in the cytoplasm. In terms of biological role, participates actively in the response to hyperosmotic and heat shock by preventing the aggregation of stress-denatured proteins, in association with DnaK and GrpE. It is the nucleotide exchange factor for DnaK and may function as a thermosensor. Unfolded proteins bind initially to DnaJ; upon interaction with the DnaJ-bound protein, DnaK hydrolyzes its bound ATP, resulting in the formation of a stable complex. GrpE releases ADP from DnaK; ATP binding to DnaK triggers the release of the substrate protein, thus completing the reaction cycle. Several rounds of ATP-dependent interactions between DnaJ, DnaK and GrpE are required for fully efficient folding. The chain is Protein GrpE from Cupriavidus taiwanensis (strain DSM 17343 / BCRC 17206 / CCUG 44338 / CIP 107171 / LMG 19424 / R1) (Ralstonia taiwanensis (strain LMG 19424)).